A 346-amino-acid polypeptide reads, in one-letter code: Guanine nucleotide-binding protein subunit beta-2 (346 aa).

WD repeat units follow at residues 57–96 (GHIN…KVQV), 99–138 (LRSA…ASGV), 147–185 (GYEG…KTMD), 188–227 (GHAG…HKQM), 230–269 (GHEM…QIAL), 274–313 (QKNT…HNGM), and 316–346 (GHEN…RLWL).

It belongs to the WD repeat G protein beta family. In terms of assembly, g proteins are composed of 3 units, alpha, beta and gamma. Interacts with Ggammae/Guanine nucleotide-binding protein subunit gamma-e.

Its function is as follows. Guanine nucleotide-binding proteins (G proteins) are involved as modulators or transducers in various transmembrane signaling systems. The beta and gamma chains are required for the GTPase activity, for replacement of GDP by GTP, and for G protein-effector interaction. This is Guanine nucleotide-binding protein subunit beta-2 from Calliphora vicina (Blue blowfly).